Consider the following 1037-residue polypeptide: Multidrug resistance protein MdtF (1037 aa).

Residues 1–9 (MANYFIDRP) are Cytoplasmic-facing. Residues 10 to 30 (VFAWVLAIIMMLAGGLAIMNL) form a helical membrane-spanning segment. Topologically, residues 31–338 (PVAQYPQIAP…TTPFIKISIQ (308 aa)) are periplasmic. Residues 339–359 (EVFKTLVEAIILVFLVMYLFL) traverse the membrane as a helical segment. Residues 360 to 369 (QNFRATIIPT) lie on the Cytoplasmic side of the membrane. The chain crosses the membrane as a helical span at residues 370 to 390 (IAVPVVILGTFAILSAVGFTI). Topologically, residues 391 to 392 (NT) are periplasmic. Residues 393–413 (LTMFGMVLAIGLLVDDAIVVV) traverse the membrane as a helical segment. The Cytoplasmic portion of the chain corresponds to 414-440 (ENVERVIAEDKLPPKEATHKSMGQIQR). A helical transmembrane segment spans residues 441–461 (ALVGIAVVLSAVFMPMAFMSG). The Periplasmic segment spans residues 462 to 471 (ATGEIYRQFS). The helical transmembrane segment at 472–492 (ITLISSMLLSVFVAMSLTPAL) threads the bilayer. Topologically, residues 493 to 534 (CATILKAAPEGGHKPNALFARFNTLFEKSTQHYTDSTRSLLR) are cytoplasmic. Residues 535 to 555 (CTGRYMVVYLLICAGMAVLFL) form a helical membrane-spanning segment. Over 556-870 (RTPTSFLPEE…SYQEALSSNQ (315 aa)) the chain is Periplasmic. Residues 871 to 891 (APALYAISLVVVFLALAALYE) form a helical membrane-spanning segment. Position 892 (serine 892) is a topological domain, cytoplasmic. Residues 893–913 (WSIPFSVMLVVPLGVVGALLA) form a helical membrane-spanning segment. The Periplasmic portion of the chain corresponds to 914–927 (TDLRGLSNDVYFQV). The chain crosses the membrane as a helical span at residues 928–948 (GLLTTIGLSAKNAILIVEFAV). At 949 to 972 (EMMQKEGKTPVEAIIEAARMRLRP) the chain is on the cytoplasmic side. Residues 973–993 (ILMTSLAFILGVLPLVISHGA) traverse the membrane as a helical segment. Over 994 to 1006 (GSGAQNAVGTGVM) the chain is Periplasmic. A helical membrane pass occupies residues 1007-1027 (GGMFAATVLAIYFVPVFFVVV). Over 1028–1037 (EHLFARFKKA) the chain is Cytoplasmic.

Belongs to the resistance-nodulation-cell division (RND) (TC 2.A.6) family. Homotrimer. Part of the tripartite efflux system MdtEF-TolC, which is composed of an inner membrane transporter, MdtF, a membrane fusion protein, MdtE, and an outer membrane component, TolC. The complex forms a large protein conduit and can translocate molecules across both the inner and outer membranes.

It localises to the cell inner membrane. Its function is as follows. Part of the tripartite efflux system MdtEF-TolC, which confers resistance to various compounds. In Escherichia coli O6:H1 (strain CFT073 / ATCC 700928 / UPEC), this protein is Multidrug resistance protein MdtF (mdtF).